The primary structure comprises 85 residues: Protein WIR1B (85 aa).

The Cytoplasmic segment spans residues 1-12; sequence MASHSAAGRRPT. A helical transmembrane segment spans residues 13–34; the sequence is ALVHIALFVAIAAVIINSSVCL. The Extracellular segment spans residues 35-85; sequence GAAVHDAATSGTGALDPNVPAVPTPGGAGQPYTGRGCRTVYGCKPPAGSQP.

Its subcellular location is the membrane. Associated with pathogen defense. The polypeptide is Protein WIR1B (WIR1B) (Triticum aestivum (Wheat)).